Consider the following 1336-residue polypeptide: Misshapen-like kinase 1 (1336 aa).

Positions 25 to 289 constitute a Protein kinase domain; that stretch reads FELVEVVGNG…TEQLLKFPFI (265 aa). Residues 31–39 and K54 each bind ATP; that span reads VGNGTYGQV. The active-site Proton acceptor is the D153. Disordered stretches follow at residues 299–347, 363–383, and 395–890; these read RIQL…NVPG, KSNSEALKQQQQLQQQQQRDP, and QRRI…GGTM. Positions 317-333 are enriched in acidic residues; sequence EETEYEYSGSEEEDDSH. 2 positions are modified to phosphoserine: S324 and S326. The span at 371–380 shows a compositional bias: low complexity; the sequence is QQQQLQQQQQ. Residues 396–466 show a composition bias toward basic and acidic residues; the sequence is RRIEEQKEER…EEQRQSERLQ (71 aa). The span at 479-496 shows a compositional bias: low complexity; sequence QKQQQQQQQQQQQQQQQQ. An omega-N-methylarginine mark is found at R502 and R510. Basic and acidic residues predominate over residues 519 to 529; it reads AWAREVEERAR. Residues 531 to 544 are compositionally biased toward polar residues; it reads NKQQNSPLAKTKPS. Positions 548–562 are enriched in pro residues; sequence PEPPIPQASPSPPGP. Residues 599 to 609 show a composition bias toward polar residues; it reads RSQSLQDQPTR. Positions 622-632 are enriched in low complexity; sequence PAAVPTPTATP. S643 is subject to Phosphoserine. The span at 672 to 684 shows a compositional bias: polar residues; that stretch reads QRTSSIATALNTS. Residue S703 is modified to Phosphoserine. Pro residues predominate over residues 718–731; that stretch reads PKPPGPPAQPPGPP. Over residues 738–750 the composition is skewed to basic and acidic residues; sequence DLRRSDPGWERSD. Phosphoserine occurs at positions 756, 765, 781, 782, and 786. The segment covering 808–825 has biased composition (basic and acidic residues); sequence LLKERTLDEAPKPPKKAM. Residues 832-848 show a composition bias toward acidic residues; sequence EEVESSEDEEEEGDGEP. The mediates interaction with RAP2A stretch occupies residues 870–1336; that stretch reads MVVHDVEEVS…TLNRNCIMNW (467 aa). Phosphothreonine is present on T895. The disordered stretch occupies residues 909 to 946; sequence GYTNLPDVVQPSHSPTENSQGQSPPTKDGGGDYQSRGL. The segment covering 919-933 has biased composition (polar residues); it reads PSHSPTENSQGQSPP. Positions 1023-1310 constitute a CNH domain; sequence NSEILCAALW…KFLCERNDKV (288 aa).

This sequence belongs to the protein kinase superfamily. STE Ser/Thr protein kinase family. STE20 subfamily. Interacts with RAP2A and NCK1. Interacts with TANC1. The cofactor is Mg(2+). In terms of processing, autophosphorylated.

Its subcellular location is the cytoplasm. It localises to the postsynaptic density. It is found in the cell projection. The protein resides in the axon. The protein localises to the dendrite. The enzyme catalyses L-seryl-[protein] + ATP = O-phospho-L-seryl-[protein] + ADP + H(+). It carries out the reaction L-threonyl-[protein] + ATP = O-phospho-L-threonyl-[protein] + ADP + H(+). Functionally, serine/threonine kinase which acts as a negative regulator of Ras-related Rap2-mediated signal transduction to control neuronal structure and AMPA receptor trafficking. Required for normal synaptic density, dendrite complexity, as well as surface AMPA receptor expression in hippocampal neurons. Can activate the JNK and MAPK14/p38 pathways and mediates stimulation of the stress-activated protein kinase MAPK14/p38 MAPK downstream of the Raf/ERK pathway. Phosphorylates TANC1 upon stimulation by RAP2A, MBP and SMAD1. Has an essential function in negative selection of thymocytes, perhaps by coupling NCK1 to activation of JNK1. Activator of the Hippo signaling pathway which plays a pivotal role in organ size control and tumor suppression by restricting proliferation and promoting apoptosis. MAP4Ks act in parallel to and are partially redundant with STK3/MST2 and STK4/MST2 in the phosphorylation and activation of LATS1/2, and establish MAP4Ks as components of the expanded Hippo pathway. The sequence is that of Misshapen-like kinase 1 (Mink1) from Rattus norvegicus (Rat).